We begin with the raw amino-acid sequence, 60 residues long: MKIKVTLVKSPIGYSENQRKVLKSLGLGKMGSSVVHDDTPNIQGMIRKCAHLVAVENVAE.

This sequence belongs to the universal ribosomal protein uL30 family. In terms of assembly, part of the 50S ribosomal subunit.

This Desulfitobacterium hafniense (strain DSM 10664 / DCB-2) protein is Large ribosomal subunit protein uL30.